The primary structure comprises 226 residues: EEF1A lysine methyltransferase 3 (226 aa).

Residues Trp57, 83–85, Asp104, Trp133, and Ala150 contribute to the S-adenosyl-L-methionine site; that span reads GAG.

It belongs to the methyltransferase superfamily. METTL21 family. In terms of assembly, interacts with members of the heat shock protein 70 and 90 families and of the TCP-1 chaperonin family, as well as with HSPD1, STIP1 and tubulin; at least some of these proteins may be methylation substrates.

Its subcellular location is the cytoplasm. It is found in the cytoskeleton. It localises to the microtubule organizing center. The protein resides in the centrosome. It carries out the reaction L-lysyl-[protein] + 3 S-adenosyl-L-methionine = N(6),N(6),N(6)-trimethyl-L-lysyl-[protein] + 3 S-adenosyl-L-homocysteine + 3 H(+). The catalysed reaction is L-lysyl-[protein] + S-adenosyl-L-methionine = N(6)-methyl-L-lysyl-[protein] + S-adenosyl-L-homocysteine + H(+). The enzyme catalyses N(6)-methyl-L-lysyl-[protein] + S-adenosyl-L-methionine = N(6),N(6)-dimethyl-L-lysyl-[protein] + S-adenosyl-L-homocysteine + H(+). It catalyses the reaction N(6),N(6)-dimethyl-L-lysyl-[protein] + S-adenosyl-L-methionine = N(6),N(6),N(6)-trimethyl-L-lysyl-[protein] + S-adenosyl-L-homocysteine + H(+). Its function is as follows. Protein-lysine methyltransferase that selectively mono-, di- and trimethylates 'Lys-165' of the translation elongation factors EEF1A1 and EEF1A2 in an aminoacyl-tRNA and GTP-dependent manner. EEF1A1 methylation by EEF1AKMT3 is dynamic as well as inducible by stress conditions, such as ER-stress, and plays a regulatory role on mRNA translation. The sequence is that of EEF1A lysine methyltransferase 3 from Homo sapiens (Human).